We begin with the raw amino-acid sequence, 172 residues long: 3-hydroxydecanoyl-[acyl-carrier-protein] dehydratase (172 aa).

His-71 is an active-site residue.

The protein belongs to the thioester dehydratase family. FabA subfamily. In terms of assembly, homodimer.

It is found in the cytoplasm. The catalysed reaction is a (3R)-hydroxyacyl-[ACP] = a (2E)-enoyl-[ACP] + H2O. The enzyme catalyses (3R)-hydroxydecanoyl-[ACP] = (2E)-decenoyl-[ACP] + H2O. It catalyses the reaction (2E)-decenoyl-[ACP] = (3Z)-decenoyl-[ACP]. It functions in the pathway lipid metabolism; fatty acid biosynthesis. Necessary for the introduction of cis unsaturation into fatty acids. Catalyzes the dehydration of (3R)-3-hydroxydecanoyl-ACP to E-(2)-decenoyl-ACP and then its isomerization to Z-(3)-decenoyl-ACP. Can catalyze the dehydratase reaction for beta-hydroxyacyl-ACPs with saturated chain lengths up to 16:0, being most active on intermediate chain length. The chain is 3-hydroxydecanoyl-[acyl-carrier-protein] dehydratase from Klebsiella pneumoniae (strain 342).